We begin with the raw amino-acid sequence, 240 residues long: Proteasome subunit alpha (240 aa).

The protein belongs to the peptidase T1A family. The 20S proteasome core is composed of 14 alpha and 14 beta subunits that assemble into four stacked heptameric rings, resulting in a barrel-shaped structure. The two inner rings, each composed of seven catalytic beta subunits, are sandwiched by two outer rings, each composed of seven alpha subunits. The catalytic chamber with the active sites is on the inside of the barrel. Has a gated structure, the ends of the cylinder being occluded by the N-termini of the alpha-subunits. Is capped by the proteasome-associated ATPase, ARC.

It localises to the cytoplasm. It functions in the pathway protein degradation; proteasomal Pup-dependent pathway. The formation of the proteasomal ATPase ARC-20S proteasome complex, likely via the docking of the C-termini of ARC into the intersubunit pockets in the alpha-rings, may trigger opening of the gate for substrate entry. Interconversion between the open-gate and close-gate conformations leads to a dynamic regulation of the 20S proteasome proteolysis activity. Functionally, component of the proteasome core, a large protease complex with broad specificity involved in protein degradation. The sequence is that of Proteasome subunit alpha from Frankia casuarinae (strain DSM 45818 / CECT 9043 / HFP020203 / CcI3).